The chain runs to 288 residues: Bifunctional protein FolD (288 aa).

Residues Gly-166–Ser-168 and Ile-232 each bind NADP(+).

This sequence belongs to the tetrahydrofolate dehydrogenase/cyclohydrolase family. Homodimer.

It catalyses the reaction (6R)-5,10-methylene-5,6,7,8-tetrahydrofolate + NADP(+) = (6R)-5,10-methenyltetrahydrofolate + NADPH. The enzyme catalyses (6R)-5,10-methenyltetrahydrofolate + H2O = (6R)-10-formyltetrahydrofolate + H(+). Its pathway is one-carbon metabolism; tetrahydrofolate interconversion. Catalyzes the oxidation of 5,10-methylenetetrahydrofolate to 5,10-methenyltetrahydrofolate and then the hydrolysis of 5,10-methenyltetrahydrofolate to 10-formyltetrahydrofolate. This Escherichia fergusonii (strain ATCC 35469 / DSM 13698 / CCUG 18766 / IAM 14443 / JCM 21226 / LMG 7866 / NBRC 102419 / NCTC 12128 / CDC 0568-73) protein is Bifunctional protein FolD.